A 297-amino-acid chain; its full sequence is Acetaldehyde dehydrogenase (297 aa).

Catalysis depends on Cys-128, which acts as the Acyl-thioester intermediate. NAD(+) contacts are provided by residues 159–167 (SAGPGTRQN) and Asn-272.

This sequence belongs to the acetaldehyde dehydrogenase family.

The enzyme catalyses acetaldehyde + NAD(+) + CoA = acetyl-CoA + NADH + H(+). In Desulfitobacterium hafniense (strain DSM 10664 / DCB-2), this protein is Acetaldehyde dehydrogenase.